An 867-amino-acid polypeptide reads, in one-letter code: 2-methylcitrate dehydratase (2-methyl-trans-aconitate forming) (867 aa).

[4Fe-4S] cluster contacts are provided by Cys410, Cys476, and Cys479.

This sequence belongs to the aconitase/IPM isomerase family. [4Fe-4S] cluster serves as cofactor.

It catalyses the reaction (2S,3S)-2-methylcitrate = 2-methyl-trans-aconitate + H2O. The catalysed reaction is citrate = D-threo-isocitrate. It participates in organic acid metabolism; propanoate degradation. Inhibited by ferricyanide and EDTA. In terms of biological role, involved in the catabolism of short chain fatty acids (SCFA) via the 2-methylcitrate cycle II (propionate degradation route). In vivo under anaerobic conditions, AcnD catalyzes the stereospecific dehydration of (2S,3S)-methylcitrate (2-MC) to yield the trans isomer of 2-methyl-aconitate (2-MCA). AcnD can also accept citrate and cis-aconitate, but with a lower efficiency. 2-methylisocitrate and isocitrate are not substrates. The polypeptide is 2-methylcitrate dehydratase (2-methyl-trans-aconitate forming) (acnD) (Shewanella oneidensis (strain ATCC 700550 / JCM 31522 / CIP 106686 / LMG 19005 / NCIMB 14063 / MR-1)).